A 236-amino-acid polypeptide reads, in one-letter code: Orotidine 5'-phosphate decarboxylase (236 aa).

Residues Asp-14, Lys-36, 63 to 72, Thr-122, Arg-183, Gln-192, Gly-212, and Arg-213 each bind substrate; that span reads DLKYHDIPNT. Residue Lys-65 is the Proton donor of the active site.

This sequence belongs to the OMP decarboxylase family. Type 1 subfamily. In terms of assembly, homodimer.

It catalyses the reaction orotidine 5'-phosphate + H(+) = UMP + CO2. The protein operates within pyrimidine metabolism; UMP biosynthesis via de novo pathway; UMP from orotate: step 2/2. Functionally, catalyzes the decarboxylation of orotidine 5'-monophosphate (OMP) to uridine 5'-monophosphate (UMP). The polypeptide is Orotidine 5'-phosphate decarboxylase (Halorhodospira halophila (strain DSM 244 / SL1) (Ectothiorhodospira halophila (strain DSM 244 / SL1))).